The chain runs to 385 residues: tRNA(Met) cytidine acetate ligase (385 aa).

ATP is bound by residues 7–20 (VAEY…HEFL), glycine 101, asparagine 153, and arginine 178.

It belongs to the TmcAL family.

It localises to the cytoplasm. The enzyme catalyses cytidine(34) in elongator tRNA(Met) + acetate + ATP = N(4)-acetylcytidine(34) in elongator tRNA(Met) + AMP + diphosphate. Its function is as follows. Catalyzes the formation of N(4)-acetylcytidine (ac(4)C) at the wobble position of elongator tRNA(Met), using acetate and ATP as substrates. First activates an acetate ion to form acetyladenylate (Ac-AMP) and then transfers the acetyl group to tRNA to form ac(4)C34. The chain is tRNA(Met) cytidine acetate ligase from Lactobacillus gasseri (strain ATCC 33323 / DSM 20243 / BCRC 14619 / CIP 102991 / JCM 1131 / KCTC 3163 / NCIMB 11718 / NCTC 13722 / AM63).